A 91-amino-acid polypeptide reads, in one-letter code: CRISPR-associated endoribonuclease Cas2 (91 aa).

A Mg(2+)-binding site is contributed by aspartate 14.

The protein belongs to the CRISPR-associated endoribonuclease Cas2 protein family. Homodimer, forms a heterotetramer with a Cas1 homodimer. Requires Mg(2+) as cofactor.

Its function is as follows. CRISPR (clustered regularly interspaced short palindromic repeat), is an adaptive immune system that provides protection against mobile genetic elements (viruses, transposable elements and conjugative plasmids). CRISPR clusters contain sequences complementary to antecedent mobile elements and target invading nucleic acids. CRISPR clusters are transcribed and processed into CRISPR RNA (crRNA). Functions as a ssRNA-specific endoribonuclease. Involved in the integration of spacer DNA into the CRISPR cassette. This Nanoarchaeum equitans (strain Kin4-M) protein is CRISPR-associated endoribonuclease Cas2.